Reading from the N-terminus, the 834-residue chain is WW domain-containing adapter protein with coiled-coil homolog (834 aa).

Disordered stretches follow at residues 1 to 247 (MVMH…WSEH), 268 to 411 (KPKE…SVAT), and 430 to 504 (VTGA…GAKG). The span at 22–31 (HTSYQSSKYS) shows a compositional bias: low complexity. Basic and acidic residues predominate over residues 33–50 (SKRDYERDRSSNYRDRDL). Gly residues predominate over residues 53-77 (GAGGGGGGGSAGGGGGGSGNGGGPL). The span at 96-108 (RSHDLRDRSDHRG) shows a compositional bias: basic and acidic residues. The segment covering 109 to 119 (GGGGNGRGGSG) has biased composition (gly residues). Basic and acidic residues-rich tracts occupy residues 127–168 (KMRD…DRRG), 181–246 (SSRE…DWSE), and 268–303 (KPKE…DRFS). Residues 244-271 (WSEHVSSSGKMYYYNCKTEISQWEKPKE) enclose the WW domain. Composition is skewed to polar residues over residues 304 to 314 (RSTYKHSNSSR) and 350 to 363 (GDST…YSLS). The segment covering 369–384 (HGGGPGGGGPGGGGGS) has biased composition (gly residues). Composition is skewed to low complexity over residues 402 to 411 (TANSSASVAT) and 431 to 466 (TGAT…LRNS). Residues 472 to 496 (GSTSGTTVPTLGSQDPHQHHLNSNA) are compositionally biased toward polar residues.

As to expression, expressed in adult head and thorax and in larval central nervous system and fat body.

It is found in the nucleus. Its subcellular location is the lysosome. Acts as a linker between gene transcription and histone H2B monoubiquitination at 'Lys-118'. Regulates the cell-cycle checkpoint activation in response to DNA damage. Positive regulator of amino acid starvation-induced autophagy. Also acts as a negative regulator of basal autophagy. Positively regulates mTor activity. Promotes, in an energy-dependent manner, the assembly of the TTT complex and the RUVBL complex composed of pont and rept into the TTT-RUVBL complex. This leads to dimerization of the mTORC1 complex and its subsequent activation. May negatively regulate the ubiquitin proteasome pathway. Required for habituation, a form of non-associative learning. This chain is WW domain-containing adapter protein with coiled-coil homolog, found in Drosophila melanogaster (Fruit fly).